A 260-amino-acid polypeptide reads, in one-letter code: Translation initiation factor 2 subunit alpha (260 aa).

Residues 12-83 enclose the S1 motif domain; it reads GDLIVGTVHK…KKGHVDASLK (72 aa).

It belongs to the eIF-2-alpha family. In terms of assembly, heterotrimer composed of an alpha, a beta and a gamma chain.

Functionally, eIF-2 functions in the early steps of protein synthesis by forming a ternary complex with GTP and initiator tRNA. The sequence is that of Translation initiation factor 2 subunit alpha from Methanosphaera stadtmanae (strain ATCC 43021 / DSM 3091 / JCM 11832 / MCB-3).